The following is a 469-amino-acid chain: L-seryl-tRNA(Sec) selenium transferase (469 aa).

K298 carries the post-translational modification N6-(pyridoxal phosphate)lysine.

The protein belongs to the SelA family. It depends on pyridoxal 5'-phosphate as a cofactor.

The protein localises to the cytoplasm. The enzyme catalyses L-seryl-tRNA(Sec) + selenophosphate + H(+) = L-selenocysteinyl-tRNA(Sec) + phosphate. It functions in the pathway aminoacyl-tRNA biosynthesis; selenocysteinyl-tRNA(Sec) biosynthesis; selenocysteinyl-tRNA(Sec) from L-seryl-tRNA(Sec) (bacterial route): step 1/1. Its function is as follows. Converts seryl-tRNA(Sec) to selenocysteinyl-tRNA(Sec) required for selenoprotein biosynthesis. The protein is L-seryl-tRNA(Sec) selenium transferase of Nitratidesulfovibrio vulgaris (strain ATCC 29579 / DSM 644 / CCUG 34227 / NCIMB 8303 / VKM B-1760 / Hildenborough) (Desulfovibrio vulgaris).